A 428-amino-acid polypeptide reads, in one-letter code: Anaerobic glycerol-3-phosphate dehydrogenase subunit B (428 aa).

This sequence belongs to the anaerobic G-3-P dehydrogenase subunit B family. As to quaternary structure, composed of a catalytic GlpA/B dimer and of membrane bound GlpC. Requires FMN as cofactor.

It catalyses the reaction a quinone + sn-glycerol 3-phosphate = dihydroxyacetone phosphate + a quinol. The protein operates within polyol metabolism; glycerol degradation via glycerol kinase pathway; glycerone phosphate from sn-glycerol 3-phosphate (anaerobic route): step 1/1. Its function is as follows. Conversion of glycerol 3-phosphate to dihydroxyacetone. Uses fumarate or nitrate as electron acceptor. The protein is Anaerobic glycerol-3-phosphate dehydrogenase subunit B of Actinobacillus pleuropneumoniae serotype 5b (strain L20).